The sequence spans 367 residues: Flagellar P-ring protein (367 aa).

The first 18 residues, 1–18 (MFRALITALFCFSGLALA), serve as a signal peptide directing secretion.

The protein belongs to the FlgI family. The basal body constitutes a major portion of the flagellar organelle and consists of four rings (L,P,S, and M) mounted on a central rod.

It is found in the periplasm. The protein localises to the bacterial flagellum basal body. Functionally, assembles around the rod to form the L-ring and probably protects the motor/basal body from shearing forces during rotation. The chain is Flagellar P-ring protein from Rhizorhabdus wittichii (strain DSM 6014 / CCUG 31198 / JCM 15750 / NBRC 105917 / EY 4224 / RW1) (Sphingomonas wittichii).